A 521-amino-acid chain; its full sequence is Probable tRNA (uracil-O(2)-)-methyltransferase (521 aa).

This sequence belongs to the TRM44 family.

It localises to the cytoplasm. The catalysed reaction is uridine(44) in tRNA(Ser) + S-adenosyl-L-methionine = 2'-O-methyluridine(44) in tRNA(Ser) + S-adenosyl-L-homocysteine + H(+). Probable adenosyl-L-methionine (AdoMet)-dependent tRNA (uracil-O(2)-)-methyltransferase. In Drosophila melanogaster (Fruit fly), this protein is Probable tRNA (uracil-O(2)-)-methyltransferase (trmt44).